A 622-amino-acid chain; its full sequence is Mitochondrial distribution and morphology protein 34 (622 aa).

In terms of domain architecture, SMP-LTD spans 1–204 (MSFKVNWNSL…LPTLIHQLSL (204 aa)). Disordered regions lie at residues 362-399 (YSNK…PSEL) and 568-592 (FDGG…TRNE). Residues 370–384 (KPKRRRIKVHKKNKS) are compositionally biased toward basic residues. The segment covering 390–399 (TTTTSKPSEL) has biased composition (polar residues). Positions 571–583 (GKNNNTNDNNSKN) are enriched in low complexity.

Belongs to the MDM34 family. Component of the ER-mitochondria encounter structure (ERMES) or MDM complex, composed of MMM1, MDM10, MDM12 and MDM34.

It is found in the mitochondrion outer membrane. Functionally, component of the ERMES/MDM complex, which serves as a molecular tether to connect the endoplasmic reticulum (ER) and mitochondria. Components of this complex are involved in the control of mitochondrial shape and protein biogenesis, and function in nonvesicular lipid trafficking between the ER and mitochondria. MDM34 is required for the interaction of the ER-resident membrane protein MMM1 and the outer mitochondrial membrane-resident beta-barrel protein MDM10. In Candida dubliniensis (strain CD36 / ATCC MYA-646 / CBS 7987 / NCPF 3949 / NRRL Y-17841) (Yeast), this protein is Mitochondrial distribution and morphology protein 34.